We begin with the raw amino-acid sequence, 459 residues long: Vasoactive intestinal polypeptide receptor 1 (459 aa).

The signal sequence occupies residues 1 to 30 (MRPPSLPPARWLCVLAGALACALGPAGSRA). Topologically, residues 31 to 142 (ASPHQECEYL…EQQQTEFYDA (112 aa)) are extracellular. 5 cysteine pairs are disulfide-bonded: Cys-37-Cys-209, Cys-50-Cys-72, Cys-63-Cys-105, Cys-86-Cys-122, and Cys-216-Cys-286. N-linked (GlcNAc...) asparagine glycosylation is found at Asn-58, Asn-69, Asn-100, and Asn-104. A helical membrane pass occupies residues 143–167 (VKTGYTIGYSLSLASLLVAMAILSL). Topologically, residues 168-175 (FRKLHCTR) are cytoplasmic. Residues 176–197 (NYIHMHLFMSFILRATAVFIKD) traverse the membrane as a helical segment. The Extracellular portion of the chain corresponds to 198 to 217 (MALFNNGETDHCSEASVSCK). Residues 218-242 (AAVVFFQYCVMANFFWLLVEGLYLH) form a helical membrane-spanning segment. At 243–255 (TLLAVSFFSERKY) the chain is on the cytoplasmic side. Residues 256–277 (FWGYILIGWGVPSVFIMIWTIV) form a helical membrane-spanning segment. Over 278 to 293 (RIHFEDFGCWDTIINS) the chain is Extracellular. The N-linked (GlcNAc...) asparagine glycan is linked to Asn-292. The chain crosses the membrane as a helical span at residues 294–318 (SLWWIIKGPILISILVNFILFICII). Topologically, residues 319–340 (RILVQKLRPPDIGKNDSSPYSR) are cytoplasmic. The chain crosses the membrane as a helical span at residues 341–361 (LAKSTLLLIPLFGVHYVMFAF). Residues 362–369 (FPDNFKAQ) lie on the Extracellular side of the membrane. The helical transmembrane segment at 370–393 (VKMVFELVVGSFQGFVVAILYCFL) threads the bilayer. At 394–459 (NGEVQAELRR…SSFQAEVSLV (66 aa)) the chain is on the cytoplasmic side.

Belongs to the G-protein coupled receptor 2 family. As to quaternary structure, interacts with ADCYAP1/PACAP; activated by both PACAP27 and PACAP38 neuropeptides. Interacts with VIP; the interaction results in VIPR1 activation.

It is found in the cell membrane. Its function is as follows. G protein-coupled receptor activated by the neuropeptides vasoactive intestinal peptide (VIP) and pituitary adenylate cyclase-activating polypeptide (ADCYAP1/PACAP). Binds VIP and both PACAP27 and PACAP38 bioactive peptides with the following order of ligand affinity VIP = PACAP27 &gt; PACAP38. Ligand binding causes a conformation change that triggers signaling via guanine nucleotide-binding proteins (G proteins) and modulates the activity of downstream effectors. Activates cAMP-dependent pathway. This Mus musculus (Mouse) protein is Vasoactive intestinal polypeptide receptor 1.